Reading from the N-terminus, the 96-residue chain is Muconolactone Delta-isomerase 2 (96 aa).

Belongs to the muconolactone Delta-isomerase family. In terms of assembly, homodecamer.

It carries out the reaction (S)-muconolactone = (4,5-dihydro-5-oxofuran-2-yl)-acetate. The protein operates within aromatic compound metabolism; beta-ketoadipate pathway; 5-oxo-4,5-dihydro-2-furylacetate from catechol: step 3/3. This Acinetobacter lwoffii protein is Muconolactone Delta-isomerase 2 (catC2).